A 262-amino-acid chain; its full sequence is Ribosomal RNA small subunit methyltransferase A (262 aa).

The S-adenosyl-L-methionine site is built by Asn-14, Leu-16, Gly-41, Glu-63, Asp-85, and Asn-105.

It belongs to the class I-like SAM-binding methyltransferase superfamily. rRNA adenine N(6)-methyltransferase family. RsmA subfamily.

It localises to the cytoplasm. The enzyme catalyses adenosine(1518)/adenosine(1519) in 16S rRNA + 4 S-adenosyl-L-methionine = N(6)-dimethyladenosine(1518)/N(6)-dimethyladenosine(1519) in 16S rRNA + 4 S-adenosyl-L-homocysteine + 4 H(+). In terms of biological role, specifically dimethylates two adjacent adenosines (A1518 and A1519) in the loop of a conserved hairpin near the 3'-end of 16S rRNA in the 30S particle. May play a critical role in biogenesis of 30S subunits. The polypeptide is Ribosomal RNA small subunit methyltransferase A (Maridesulfovibrio salexigens (strain ATCC 14822 / DSM 2638 / NCIMB 8403 / VKM B-1763) (Desulfovibrio salexigens)).